Here is a 425-residue protein sequence, read N- to C-terminus: High-affinity branched-chain amino acid transport system permease protein LivM (425 aa).

The next 11 helical transmembrane spans lie at 6–26 (IAMALFSAAMFFVLAGVFMGV), 45–65 (WQWIFIGTAVVFFFQLLRPMF), 92–112 (FLMALLVIAVAWPFMVSRGSV), 120–140 (IYIILGLGLNVVVGLSGLLVL), 145–165 (FYAIGAYTFALLNHYYGLGFW), 167–187 (CLPLAGLVSAAAGFLLGFPVL), 191–211 (GDYLAIVTLGFGEIVRILLLN), 260–280 (RVIFLYLVALLLVVLSLFVIN), 311–331 (IKLTAFTISAAFAGFAGTLFA), 353–373 (IVVLGGMGSQFAVILAAVLLV), and 388–408 (LMLGGLMVLMMIWRPQGLLPM).

The protein belongs to the binding-protein-dependent transport system permease family. LivHM subfamily.

It is found in the cell inner membrane. In terms of biological role, part of the binding-protein-dependent transport system for branched-chain amino acids. Probably responsible for the translocation of the substrates across the membrane. The chain is High-affinity branched-chain amino acid transport system permease protein LivM (livM) from Salmonella typhimurium (strain LT2 / SGSC1412 / ATCC 700720).